A 421-amino-acid chain; its full sequence is Gamma-glutamyl phosphate reductase (421 aa).

Belongs to the gamma-glutamyl phosphate reductase family.

Its subcellular location is the cytoplasm. The enzyme catalyses L-glutamate 5-semialdehyde + phosphate + NADP(+) = L-glutamyl 5-phosphate + NADPH + H(+). Its pathway is amino-acid biosynthesis; L-proline biosynthesis; L-glutamate 5-semialdehyde from L-glutamate: step 2/2. Its function is as follows. Catalyzes the NADPH-dependent reduction of L-glutamate 5-phosphate into L-glutamate 5-semialdehyde and phosphate. The product spontaneously undergoes cyclization to form 1-pyrroline-5-carboxylate. The protein is Gamma-glutamyl phosphate reductase of Brucella suis biovar 1 (strain 1330).